The sequence spans 132 residues: Protein NrdI (132 aa).

It belongs to the NrdI family.

In terms of biological role, probably involved in ribonucleotide reductase function. The sequence is that of Protein NrdI from Agrobacterium fabrum (strain C58 / ATCC 33970) (Agrobacterium tumefaciens (strain C58)).